The following is a 362-amino-acid chain: Heat-inducible transcription repressor HrcA (362 aa).

Belongs to the HrcA family.

Functionally, negative regulator of class I heat shock genes (grpE-dnaK-dnaJ and groELS operons). Prevents heat-shock induction of these operons. The polypeptide is Heat-inducible transcription repressor HrcA (Bradyrhizobium diazoefficiens (strain JCM 10833 / BCRC 13528 / IAM 13628 / NBRC 14792 / USDA 110)).